Consider the following 414-residue polypeptide: Histidine--tRNA ligase (414 aa).

The protein belongs to the class-II aminoacyl-tRNA synthetase family. As to quaternary structure, homodimer.

The protein localises to the cytoplasm. It catalyses the reaction tRNA(His) + L-histidine + ATP = L-histidyl-tRNA(His) + AMP + diphosphate + H(+). This chain is Histidine--tRNA ligase, found in Synechococcus sp. (strain RCC307).